The chain runs to 389 residues: Liposome tubulation protein MamY (389 aa).

The Cytoplasmic segment spans residues 1-31 (MAIAAIMGDVLMLMGFNKAAFGKLNSASRAA). A helical transmembrane segment spans residues 32–52 (LIGAVIWAVLSIVYLTIFNGW). The Lumenal portion of the chain corresponds to 53 to 62 (KNLFTMLPHE). A helical transmembrane segment spans residues 63–83 (FFIVLLSIALPIGLTVLILML). At 84–389 (SRIVKSVDTL…TETAPDSGMD (306 aa)) the chain is on the cytoplasmic side.

It belongs to the magnetosome MamY family.

Its subcellular location is the magnetosome membrane. Functionally, causes tubulation when added to magnetosome-derived liposomes, binds liposomes; may be involved in constriction of the cell inner membrane to form mature magnetosomes. Binds preferentially to cardiolipin, a component of bacterial membranes, with very poor to no binding of other tested (phospho)lipids. Addition of cardiolipin to magnetosome-derived lipids increases tubulation. May function with MamX, MamZ amd Mms6. The polypeptide is Liposome tubulation protein MamY (Paramagnetospirillum magneticum (strain ATCC 700264 / AMB-1) (Magnetospirillum magneticum)).